A 30-amino-acid chain; its full sequence is Varv peptide G (30 aa).

Residues 1 to 30 (GVPVCGETCFGGTCNTPGCSCDPWPVCSRN) constitute a cross-link (cyclopeptide (Gly-Asn)). Disulfide bonds link Cys-5/Cys-19, Cys-9/Cys-21, and Cys-14/Cys-27.

This is a cyclic peptide.

Probably participates in a plant defense mechanism. The sequence is that of Varv peptide G from Viola arvensis (European field pansy).